The chain runs to 239 residues: Probable transcriptional regulatory protein EF_2866 (239 aa).

It belongs to the TACO1 family. YeeN subfamily.

Its subcellular location is the cytoplasm. This Enterococcus faecalis (strain ATCC 700802 / V583) protein is Probable transcriptional regulatory protein EF_2866.